Consider the following 860-residue polypeptide: Leucine--tRNA ligase (860 aa).

The 'HIGH' region signature appears at 42-52 (PYPSGRLHMGH). The short motif at 619-623 (KMSKS) is the 'KMSKS' region element. Lys622 is a binding site for ATP.

This sequence belongs to the class-I aminoacyl-tRNA synthetase family.

It localises to the cytoplasm. The catalysed reaction is tRNA(Leu) + L-leucine + ATP = L-leucyl-tRNA(Leu) + AMP + diphosphate. This Klebsiella pneumoniae subsp. pneumoniae (strain ATCC 700721 / MGH 78578) protein is Leucine--tRNA ligase.